Here is a 258-residue protein sequence, read N- to C-terminus: UPF0246 protein YaaA (258 aa).

Belongs to the UPF0246 family.

This is UPF0246 protein YaaA from Escherichia coli (strain UTI89 / UPEC).